The following is a 569-amino-acid chain: Urease subunit beta (569 aa).

Residues G131–F569 enclose the Urease domain. Residues H136, H138, and K219 each contribute to the Ni(2+) site. K219 carries the N6-carboxylysine modification. Substrate is bound at residue H221. 2 residues coordinate Ni(2+): H248 and H274. The Proton donor role is filled by H322. D362 contacts Ni(2+).

This sequence belongs to the metallo-dependent hydrolases superfamily. Urease alpha subunit family. As to quaternary structure, heterohexamer of 3 UreA (alpha) and 3 UreB (beta) subunits. Ni cation is required as a cofactor. Post-translationally, carboxylation allows a single lysine to coordinate two nickel ions.

It is found in the cytoplasm. It catalyses the reaction urea + 2 H2O + H(+) = hydrogencarbonate + 2 NH4(+). Its pathway is nitrogen metabolism; urea degradation; CO(2) and NH(3) from urea (urease route): step 1/1. The sequence is that of Urease subunit beta from Helicobacter pylori (strain Shi470).